Here is a 1164-residue protein sequence, read N- to C-terminus: WASH complex subunit 5 (1164 aa).

This sequence belongs to the strumpellin family. Probable component of the WASH complex.

This is WASH complex subunit 5 from Dictyostelium discoideum (Social amoeba).